A 121-amino-acid chain; its full sequence is LSM complex subunit lsm4 (121 aa).

One can recognise a Sm domain in the interval 2–75 (LPLTLLNATQ…IKYLRIQDEV (74 aa)). Residues 82 to 121 (QQAQQRENRGSRFRGRGQRGRGNYGHTAPNRRGRGRGGHM) form a disordered region. Residues 110 to 121 (PNRRGRGRGGHM) show a composition bias toward basic residues.

This sequence belongs to the snRNP Sm proteins family. As to quaternary structure, component of the heptameric LSM1-LSM7 complex that forms a seven-membered ring structure with a donut shape. The LSm subunits are arranged in the order lsm1, lsm2, lsm3, lsm6, lsm5, lsm7 and lsm4. Component of the heptameric LSM2-LSM8 complex that forms a seven-membered ring structure with a donut shape. The LSm subunits are arranged in the order lsm8, lsm2, lsm3, lsm6, lsm5, lsm7 and lsm4.

The protein localises to the nucleus. It localises to the cytoplasm. Component of LSm protein complexes, which are involved in RNA processing and may function in a chaperone-like manner. Component of the cytoplasmic LSM1-LSM7 complex which is involved in mRNA degradation by activating the decapping step. The LSM1-LSM7 complex loads onto the 3'-end of single stranded RNA. Component of the nuclear LSM2-LSM8 complex, which is involved in spliceosome assembly. The LSM2-LSM8 complex plays a role in the biogenesis of the spliceosomal U4/U6-U5 tri-snRNP complex by accelerating prp24-mediated annealing of U4/U6 di-snRNA. The LSM2-LSM8 complex binds U6 snRNA terminating with a cyclic 2',3' phosphate group; RNA with an unmodified 3' hydroxyl or non-cyclic 3' phosphate is bound less tightly. This Schizosaccharomyces pombe (strain 972 / ATCC 24843) (Fission yeast) protein is LSM complex subunit lsm4 (lsm4).